Reading from the N-terminus, the 246-residue chain is 1-(5-phosphoribosyl)-5-[(5-phosphoribosylamino)methylideneamino] imidazole-4-carboxamide isomerase (246 aa).

Asp-8 acts as the Proton acceptor in catalysis. Asp-130 acts as the Proton donor in catalysis.

Belongs to the HisA/HisF family.

It is found in the cytoplasm. The catalysed reaction is 1-(5-phospho-beta-D-ribosyl)-5-[(5-phospho-beta-D-ribosylamino)methylideneamino]imidazole-4-carboxamide = 5-[(5-phospho-1-deoxy-D-ribulos-1-ylimino)methylamino]-1-(5-phospho-beta-D-ribosyl)imidazole-4-carboxamide. It functions in the pathway amino-acid biosynthesis; L-histidine biosynthesis; L-histidine from 5-phospho-alpha-D-ribose 1-diphosphate: step 4/9. This is 1-(5-phosphoribosyl)-5-[(5-phosphoribosylamino)methylideneamino] imidazole-4-carboxamide isomerase from Hydrogenovibrio crunogenus (strain DSM 25203 / XCL-2) (Thiomicrospira crunogena).